The following is a 304-amino-acid chain: MTNSCDRPLITPLEPPNASFIHISVLSQETIAGLNIIPGGHYLDATVGSGGHSRLILATFPDVRITAIDRDSQAIAAAASNLAELGSERLKFWQGNFADYPGKIAEFSGIIADLGVSSPQFDFPERGFSFRHEGALDMRMDQTQSLTAGEIINQWSETALADLFYQYGEERRSRSMAKHIVQQRPFKTTTQLAEAIAQTVPPKYRYGRIHPATRVFQALRIAVNEELSSLERFLDQAPQWLQPGGRIGIISFHSLEDRIVKYRFRDSSWLTVMTKKPIIPQREEQLKNPRSRSAKLRLAERHLV.

S-adenosyl-L-methionine-binding positions include 50–52 (GGH), Asp69, Phe97, Asp113, and Gln120.

This sequence belongs to the methyltransferase superfamily. RsmH family.

It is found in the cytoplasm. The enzyme catalyses cytidine(1402) in 16S rRNA + S-adenosyl-L-methionine = N(4)-methylcytidine(1402) in 16S rRNA + S-adenosyl-L-homocysteine + H(+). Specifically methylates the N4 position of cytidine in position 1402 (C1402) of 16S rRNA. The sequence is that of Ribosomal RNA small subunit methyltransferase H from Rippkaea orientalis (strain PCC 8801 / RF-1) (Cyanothece sp. (strain PCC 8801)).